The primary structure comprises 149 residues: MIITEIIGNIHEQPELRTHHAETITLVDDALTKRIQRLVSDHGSELGLRLPSGHPPLRDGDVLHSDGENSILIAVAPTDVLMIRPGTLRDMAFVAHSLGNRHLPAQFDGDVMIVRYDNTVVDFLEHYGVRYERRSTVMPTPFRHSEHTH.

This sequence belongs to the UreE family.

Its subcellular location is the cytoplasm. Involved in urease metallocenter assembly. Binds nickel. Probably functions as a nickel donor during metallocenter assembly. This Corynebacterium efficiens (strain DSM 44549 / YS-314 / AJ 12310 / JCM 11189 / NBRC 100395) protein is Urease accessory protein UreE.